A 530-amino-acid polypeptide reads, in one-letter code: Pancreatic secretory granule membrane major glycoprotein GP2 (530 aa).

Residues 1-21 (MVACDLLWLAAASCLLTLVFP) form the signal peptide. An N-linked (GlcNAc...) asparagine glycan is attached at N33. 11 cysteine pairs are disulfide-bonded: C41/C52, C56/C150, C78/C168, C100/C138, C106/C173, C131/C139, C183/C193, C187/C202, C204/C234, C222/C313, and C254/C277. Residues 54–74 (DPCQNHTVLNDPSRSTENTVS) form a D10C region. N58 and N127 each carry an N-linked (GlcNAc...) asparagine glycan. Positions 179–223 (APKKCEIACRPEEECVFQNNSWTCVCRQDLNVSDTLSLQPLLDCG) constitute an EGF-like domain. N-linked (GlcNAc...) asparagine glycans are attached at residues N197 and N209. A ZP-N region spans residues 221-314 (DCGANEIKVK…FLVNVNFQCA (94 aa)). One can recognise a ZP domain in the interval 221–477 (DCGANEIKVK…PSCSTSRLRS (257 aa)). Residues N284 and N320 are each glycosylated (N-linked (GlcNAc...) asparagine). The tract at residues 315-338 (YPLDMNVSLQTALQPIVSSLNVDV) is flexible ZP-N/ZP-C linker. The tract at residues 339–350 (GGAGEFTVTMAL) is internal hydrophobic patch (IHP). The segment at 339–477 (GGAGEFTVTM…PSCSTSRLRS (139 aa)) is ZP-C. Intrachain disulfides connect C394/C454, C415/C470, and C459/C466. An external hydrophobic patch (EHP) region spans residues 484-492 (LTRVLDIGP). A lipid anchor (GPI-anchor amidated asparagine) is attached at N505. A propeptide spans 506–530 (GTPRNTGFLLAWPTFFLPVFLAWLF) (removed in mature form).

As to quaternary structure, interacts with SYCN. Interacts with bacterial adhesin fimH. Post-translationally, N-glycosylated. In terms of tissue distribution, expressed in pancreas.

It localises to the zymogen granule membrane. The protein resides in the secreted. The protein localises to the cell membrane. Its subcellular location is the apical cell membrane. It is found in the membrane raft. It localises to the endosome. Functionally, functions as an intestinal M-cell transcytotic receptor specific of type-I-piliated bacteria that participates in the mucosal immune response toward these bacteria. At the apical membrane of M-cells it binds fimH, a protein of the bacteria type I pilus tip. Internalizes bound bacteria, like E.coli and S.typhimurium, from the lumen of the intestine and delivers them, through M-cells, to the underlying organized lymphoid follicles where they are captured by antigen-presenting dendritic cells to elicit a mucosal immune response. The protein is Pancreatic secretory granule membrane major glycoprotein GP2 of Rattus norvegicus (Rat).